A 458-amino-acid polypeptide reads, in one-letter code: Argininosuccinate lyase (458 aa).

It belongs to the lyase 1 family. Argininosuccinate lyase subfamily.

It is found in the cytoplasm. It catalyses the reaction 2-(N(omega)-L-arginino)succinate = fumarate + L-arginine. Its pathway is amino-acid biosynthesis; L-arginine biosynthesis; L-arginine from L-ornithine and carbamoyl phosphate: step 3/3. In Salmonella paratyphi B (strain ATCC BAA-1250 / SPB7), this protein is Argininosuccinate lyase.